A 490-amino-acid polypeptide reads, in one-letter code: GTPase Der (490 aa).

EngA-type G domains lie at 3 to 166 (PVVA…MEDL) and 203 to 376 (IKLA…DSST). GTP-binding positions include 9 to 16 (GRPNVGKS), 56 to 60 (DTGGI), 118 to 121 (NKTD), 209 to 216 (GRPNVGKS), 256 to 260 (DTAGV), and 321 to 324 (NKWD). Residues 377 to 461 (RRVGTSMLTR…PIRIQFKEGE (85 aa)) enclose the KH-like domain.

The protein belongs to the TRAFAC class TrmE-Era-EngA-EngB-Septin-like GTPase superfamily. EngA (Der) GTPase family. Associates with the 50S ribosomal subunit.

Functionally, GTPase that plays an essential role in the late steps of ribosome biogenesis. The polypeptide is GTPase Der (Escherichia coli O81 (strain ED1a)).